The following is a 574-amino-acid chain: Thiol:disulfide interchange protein DsbD (574 aa).

The signal sequence occupies residues 1–19 (MAHRILTLILLFCSAHASA). Cys122 and Cys128 are joined by a disulfide. Residues 147–169 (VKANAATPSAATGEQTRVNSDSP) are disordered. Polar residues predominate over residues 152-169 (ATPSAATGEQTRVNSDSP). Transmembrane regions (helical) follow at residues 173–193 (LPFSAFWALLIGIGVAFTPCV), 218–238 (LLAFIYVQGMALTYTALGLVV), 253–273 (WVLVTLSAVFVLLALSMFGLF), 306–326 (IAGLICSPCTTAPLSAILLYI), 333–353 (WLGGGTLYLYALGMGLPLILV), 367–387 (WMEQVKTAFGFVILALPVFLL), and 399–419 (LWSVLGVAFFGWAFVTSLNAT). Cys192 and Cys314 form a disulfide bridge. The Thioredoxin domain occupies 430 to 574 (LLGAAMICAR…FATHLHNRLR (145 aa)). A disulfide bond links Cys489 and Cys492.

The protein belongs to the thioredoxin family. DsbD subfamily.

The protein resides in the cell inner membrane. The catalysed reaction is [protein]-dithiol + NAD(+) = [protein]-disulfide + NADH + H(+). It carries out the reaction [protein]-dithiol + NADP(+) = [protein]-disulfide + NADPH + H(+). In terms of biological role, required to facilitate the formation of correct disulfide bonds in some periplasmic proteins and for the assembly of the periplasmic c-type cytochromes. Acts by transferring electrons from cytoplasmic thioredoxin to the periplasm. This transfer involves a cascade of disulfide bond formation and reduction steps. This Cronobacter sakazakii (strain ATCC BAA-894) (Enterobacter sakazakii) protein is Thiol:disulfide interchange protein DsbD.